The following is a 1039-amino-acid chain: uncharacterized protein (1039 aa).

Residues 1-19 (MSLLMAHRKSKSSQRKLRN) are compositionally biased toward basic residues. Residues 1–38 (MSLLMAHRKSKSSQRKLRNRSSSLTPQKRRIRASKGSH) form a disordered region.

This is an uncharacterized protein from Sinorhizobium fredii (strain NBRC 101917 / NGR234).